The chain runs to 159 residues: MNITIISVGKLKEKYLKLGIDEYIKRLTRYAKLNIIEIPDEKAPENLSSAEEQIVKNKEGEGILKNIKDGMYVIALDLKGKMLSSEELADKLQSLGVAGNSNIAFIIGGSLGLSEDVLKRADYKLCFSPMTFPHQLMKLILLEQIYRGLRIIKGEPYHK.

S-adenosyl-L-methionine contacts are provided by residues Leu76, Gly108, and 127–132 (FSPMTF).

The protein belongs to the RNA methyltransferase RlmH family. Homodimer.

It localises to the cytoplasm. The catalysed reaction is pseudouridine(1915) in 23S rRNA + S-adenosyl-L-methionine = N(3)-methylpseudouridine(1915) in 23S rRNA + S-adenosyl-L-homocysteine + H(+). Its function is as follows. Specifically methylates the pseudouridine at position 1915 (m3Psi1915) in 23S rRNA. In Alkaliphilus oremlandii (strain OhILAs) (Clostridium oremlandii (strain OhILAs)), this protein is Ribosomal RNA large subunit methyltransferase H.